We begin with the raw amino-acid sequence, 141 residues long: Protein E6 (141 aa).

2 zinc fingers span residues 27–64 (CRFCNSFLTYIELREFDYKNLQLIWTQEDFVFACCSSC) and 101–137 (CQYCLKCLDLIEKLDICCSHQAFHKVRGNWKGRCRHC).

This sequence belongs to the papillomaviridae E6 protein family. In terms of assembly, forms homodimers. Interacts with ubiquitin-protein ligase UBE3A/E6-AP; this interaction stimulates UBE3A ubiquitin activity. Interacts with host BAK1.

It localises to the host cytoplasm. Its subcellular location is the host nucleus. Functionally, plays a major role in the induction and maintenance of cellular transformation. E6 associates with host UBE3A/E6-AP ubiquitin-protein ligase and modulates its activity. Protects host keratinocytes from apoptosis by mediating the degradation of host BAK1. May also inhibit host immune response. The sequence is that of Protein E6 from Homo sapiens (Human).